A 356-amino-acid polypeptide reads, in one-letter code: Protein disulfide isomerase crld-1 (356 aa).

Residues 1-17 (MSRILLLLAVLIGATSQ) form the signal peptide. At 18–299 (KEVTIKNEKC…DRPFMPIDQQ (282 aa)) the chain is on the lumenal side. The CXXC motif lies at 27-30 (CRTC). Cysteines 27 and 30 form a disulfide. Residue asparagine 122 is glycosylated (N-linked (GlcNAc...) asparagine). The EGF-like 1 domain maps to 150–188 (GLSEKADVCFGKGSCHGDGSREGSGKCKCETGYTGNLCR). 5 disulfide bridges follow: cysteine 158-cysteine 176, cysteine 178-cysteine 187, cysteine 245-cysteine 258, cysteine 251-cysteine 267, and cysteine 269-cysteine 281. The EGF-like 2; calcium-binding domain occupies 241 to 282 (DVNECQNESACTKEHEICVNTVGSFKCECKEGYKKDDEQNCQ). The N-linked (GlcNAc...) asparagine glycan is linked to asparagine 247. The helical transmembrane segment at 300-317 (LKLIAFSSLIIIITFVVW) threads the bilayer. At 318-321 (HGSP) the chain is on the cytoplasmic side. A helical membrane pass occupies residues 322 to 341 (VLYVLTGITIVALILVDLYV). Over 342–356 (NPDTIPDEAKRFLGY) the chain is Lumenal.

It belongs to the CRELD family. Interacts with unc-29. Isoforms a: Widely expressed in tissues including body wall muscles, neurons, pharynx, hypodermis, seam cells, intestine and gonad. Isoform b: Widely expressed in tissues including body wall muscles, neurons, pharynx, hypodermis, seam cells, intestine and gonad.

Its subcellular location is the endoplasmic reticulum membrane. The protein resides in the endoplasmic reticulum lumen. The catalysed reaction is Catalyzes the rearrangement of -S-S- bonds in proteins.. In terms of biological role, protein disulfide isomerase which associates with the unc-29 subunit of levamisole-sensitive nicotinic acetylcholine receptors (L-nAChR) to promote L-nAChR assembly in the endoplasmic reticulum at neuromuscular junctions. Functionally, promotes L-nAChR assembly in the endoplasmic reticulum at neuromuscular junctions. The polypeptide is Protein disulfide isomerase crld-1 (Caenorhabditis elegans).